We begin with the raw amino-acid sequence, 308 residues long: Taste receptor type 2 member 10 (308 aa).

The Extracellular portion of the chain corresponds to 1-6 (MLSVVE). A helical transmembrane segment spans residues 7–27 (GIFIFVVISESVFGVLGNGFI). The Cytoplasmic segment spans residues 28-42 (GLVNCIDCAKNKLST). The chain crosses the membrane as a helical span at residues 43–63 (IGFILTGLAISRIFLIWVIIT). Topologically, residues 64-100 (DGFIQIFSPDIYASGNLIEYISYIWVIGNQSSMWFAT) are extracellular. An N-linked (GlcNAc...) asparagine glycan is attached at Asn92. Residues 101 to 121 (SLSIFYFLKIANFSNYIFLWL) traverse the membrane as a helical segment. Topologically, residues 122–126 (KSRTN) are cytoplasmic. The helical transmembrane segment at 127-147 (MVLPFMMAFLLISSLLNFAHI) threads the bilayer. Topologically, residues 148–179 (VKILNDHKMKNDTVWHLNMYKSEYFIKQILLN) are extracellular. Residue Asn158 is glycosylated (N-linked (GlcNAc...) asparagine). Residues 180 to 200 (LGVIFFFTLSLITCVLLIISL) traverse the membrane as a helical segment. At 201–227 (WRHNRQMQSNVTGLRDSNTEAHVKAMK) the chain is on the cytoplasmic side. Residues 228 to 248 (VLISFIILFILYFIGMALEIS) traverse the membrane as a helical segment. Residues 249 to 257 (RFTVPENKL) lie on the Extracellular side of the membrane. Residues 258–278 (LLMFGMTTTAIYPWGHSFILI) form a helical membrane-spanning segment. The Cytoplasmic portion of the chain corresponds to 279-308 (LGNSKLKQASLRVLQQLKCCEKRKKSQSHI).

It belongs to the G-protein coupled receptor T2R family.

The protein resides in the membrane. In terms of biological role, receptor that may play a role in the perception of bitterness and is gustducin-linked. May play a role in sensing the chemical composition of the gastrointestinal content. The activity of this receptor may stimulate alpha gustducin, mediate PLC-beta-2 activation and lead to the gating of TRPM5. The chain is Taste receptor type 2 member 10 (TAS2R10) from Pongo pygmaeus (Bornean orangutan).